The sequence spans 124 residues: Cytoinsectotoxin-4 (124 aa).

The signal sequence occupies residues 1–19; it reads MKCFILAAALVLAFACIAA. Positions 20-62 are excised as a propeptide; it reads SEPAETENEDLDDLSDLEDEEWLDELEEAAEYLESLREFEESR. Position 123 is a phenylalanine amide (F123).

Belongs to the cationic peptide 06 (cytoinsectotoxin) family. In terms of tissue distribution, expressed by the venom gland.

The protein resides in the secreted. Insecticidal and antimicrobial peptide. Has insecticidal activity against larvae of flesh fly S.carnaria. Has antibacterial activity against Gram-positive bacterium B.subtilis B-501 (MIC=2.5 uM) and Gram-negative bacterium E.coli DH5alpha (MIC=10 uM). This Lachesana tarabaevi (Spider) protein is Cytoinsectotoxin-4.